Reading from the N-terminus, the 72-residue chain is DNA-directed RNA polymerase subunit omega (72 aa).

This sequence belongs to the RNA polymerase subunit omega family. As to quaternary structure, the RNAP catalytic core consists of 2 alpha, 1 beta, 1 beta' and 1 omega subunit. When a sigma factor is associated with the core the holoenzyme is formed, which can initiate transcription.

The catalysed reaction is RNA(n) + a ribonucleoside 5'-triphosphate = RNA(n+1) + diphosphate. Its function is as follows. Promotes RNA polymerase assembly. Latches the N- and C-terminal regions of the beta' subunit thereby facilitating its interaction with the beta and alpha subunits. The chain is DNA-directed RNA polymerase subunit omega (rpoZ) from Clostridium tetani (strain Massachusetts / E88).